We begin with the raw amino-acid sequence, 981 residues long: Alpha-mannosidase (981 aa).

The Zn(2+) site is built by histidine 23, aspartate 25, and aspartate 145. The active-site Nucleophile is aspartate 145. Asparagine 312 carries N-linked (GlcNAc...) asparagine glycosylation. Histidine 386 provides a ligand contact to Zn(2+). Disulfide bonds link cysteine 422–cysteine 432, cysteine 442–cysteine 450, and cysteine 800–cysteine 807. Asparagine 446 carries N-linked (GlcNAc...) asparagine glycosylation. The interval 938-957 (KKMKWSVEGDNEQEPQAVRG) is disordered.

The protein belongs to the glycosyl hydrolase 38 family. In terms of assembly, dimer of dimers of heavy and light subunits. Zn(2+) is required as a cofactor. In terms of processing, produced as a precursor which is then proteolytically cleaved into a 66kD heavy subunit and a 44kD light subunit. Cleavage probably occurs in protein bodies/protein storage vacuoles.

It localises to the protein storage vacuole. It carries out the reaction Hydrolysis of terminal, non-reducing alpha-D-mannose residues in alpha-D-mannosides.. Inhibited by 2,3,4,6-tetra-O-acetyl-5-fluoro-beta-L-gulopyranosyl fluoride which acts as a slow substrate, doubling as a competitive inhibitor as it forms a high steady state concentration of glycosyl-enzyme intermediate that blocks the active site. Inhibited by 2,3,4,6-tetra-O-acetyl-5-fluoro-alpha-D-mannopyranosyl fluoride which also acts as a slow substrate but no intermediates accumulate. Inhibited by EDTA. Inhibited by metal ion Cu(2+). Inhibited by metal ions Fe(2+), Cd(2+) and Co(2+). Inhibited by metal ions Ag(+) and Hg(2+). Competitively inhibited by mannono-1-4-lactone and mannono-1-5-lactone. Inhibited by swainsonine but not by 1-desoxymannojirimycin. Inhibited by pyrrolidine-3,4-diol derivatives. Functionally, liberates mannose from p-nitrophenyl-alpha-D-mannoside. Liberates mannose from further alpha-D-mannosides including methyl-, benzyl-alpha-D-mannoside, 1-6-linked di-, tri- and tetrasaccharides of alpha-D-mannose and mannosyl-rhamnose. Liberates mannose from various glycoproteins like ovalbumin and ovomucoid. Does not hydrolyze beta-D-mannosides. Has glycosyltransferase activity, forming disaccharides from mannose and lyxose but not from glucose, galactose, ribose, xylose or arabinose. The polypeptide is Alpha-mannosidase (Canavalia ensiformis (Jack bean)).